The chain runs to 1108 residues: MFQLPVNNLGSLRKARKTVKKILSDIGLEYCKEHIEDFKQFEPNDFYLKNTTWEDVGLWDPSLTKNQDYRTKPFCCSACPFSSKFFSAYKSHFRNVHSEDFENRILLNCPYCTFNADKKTLETHIKIFHAPNSSAPSSSLSTFKDKNKNDGLKPKQADNVEQAVYYCKKCTYRDPLYEIVRKHIYREHFQHVAAPYIAKAGEKSLNGAVSLGTNAREECNIHCKRCLFMPKSYEALVQHVIEDHERIGYQVTAMIGHTNVVVPRAKPLMLIAPKPQDKKGMGLPPRISSLASGNVRSLPSQQMVNRLSIPKPNLNSTGVNMMSNVHLQQNNYGVKSVGQSYGVGQSVRLGLGGNAPVSIPQQSQSVKQLLPSGNGRSFGLGAEQRPPAAARYSLQTANTSLPPGQVKSPSVSQSQASRVLGQSSSKPPPAATGPPPSNHCATQKWKICTICNELFPENVYSVHFEKEHKAEKVPAVANYIMKIHNFTSKCLYCNRYLPTDTLLNHMLIHGLSCPYCRSTFNDVEKMAAHMRMVHIDEEMGPKTDSTLSFDLTLQQGSHTNIHLLVTTYNLRDAPAESVAYHAQNNAPVPPKPQPKVQEKADVPVKSSPQAAVPYKKDVGKTLCPLCFSILKGPISDALAHHLRERHQVIQTVHPVEKKLTYKCIHCLGVYTSNMTASTITLHLVHCRGVGKTQNGQDKTNAPSRLNQSPGLAPVKRTYEQMEFPLLKKRKLEEDADSPSCFEEKPEEPVVLALDPKGHEDDSYEARKSFLTKYFNKQPYPTRREIEKLAASLWLWKSDIASHFSNKRKKCVRDCEKYKPGVLLGFNMKELNKVKHEMDFDAEWLFENHDEKDSRVNASKTVDKKHNLGKEDDSFSDSFEHLEEESNGSGSPFDPVFEVEPKIPSDNLEEPVPKVIPEGALESEKLDQKEEEEEEEEEDGSKYETIHLTEEPAKLMHDASDSEVDQDDVVEWKDGASPSESGPGSQQISDFEDNTCEMKPGTWSDESSQSEDARSSKPAAKKKATVQDDTEQLKWKNSSYGKVEGFWSKDQSQWENASENAERLPNPQIEWQNSTIDSEDGEQFDSMTDGVADPMHGSLTGVKLSSQQA.

The binds to beta-catenin/CTNNB1 stretch occupies residues 1 to 685 (MFQLPVNNLG…ASTITLHLVH (685 aa)). Residues K39 and K72 each participate in a glycyl lysine isopeptide (Lys-Gly) (interchain with G-Cter in SUMO2) cross-link. The C2H2-type 1; degenerate zinc-finger motif lies at 74–97 (FCCSACPFSSKFFSAYKSHFRNVH). S98 is modified (phosphoserine). The C2H2-type 2; degenerate zinc finger occupies 107 to 129 (LNCPYCTFNADKKTLETHIKIFH). The tract at residues 133 to 154 (SSAPSSSLSTFKDKNKNDGLKP) is disordered. A compositionally biased stretch (basic and acidic residues) spans 143-154 (FKDKNKNDGLKP). Glycyl lysine isopeptide (Lys-Gly) (interchain with G-Cter in SUMO2) cross-links involve residues K144 and K155. The C2H2-type 3; degenerate zinc finger occupies 165–188 (YYCKKCTYRDPLYEIVRKHIYREH). Glycyl lysine isopeptide (Lys-Gly) (interchain with G-Cter in SUMO2) cross-links involve residues K203, K231, K266, K274, K278, K279, K311, and K335. The C2H2-type 4; degenerate zinc-finger motif lies at 221-244 (IHCKRCLFMPKSYEALVQHVIEDH). R348 is modified (asymmetric dimethylarginine). The interval 354-361 (NAPVSIPQ) is neuroprotective peptide; contributes to CTNNB1-binding, but less effective than whole N-terminal region. Residues 360–438 (PQQSQSVKQL…PAATGPPPSN (79 aa)) form a disordered region. Glycyl lysine isopeptide (Lys-Gly) (interchain with G-Cter in SUMO2) cross-links involve residues K367 and K407. Residues 393–422 (SLQTANTSLPPGQVKSPSVSQSQASRVLGQ) are compositionally biased toward polar residues. 2 positions are modified to phosphoserine: S408 and S412. K426 participates in a covalent cross-link: Glycyl lysine isopeptide (Lys-Gly) (interchain with G-Cter in SUMO2). Residues 426–437 (KPPPAATGPPPS) show a composition bias toward pro residues. A C2H2-type 5; atypical zinc finger spans residues 446-468 (KICTICNELFPENVYSVHFEKEH). 2 consecutive C2H2-type zinc fingers follow at residues 488 to 509 (SKCL…MLIH) and 511 to 534 (LSCP…RMVH). Glycyl lysine isopeptide (Lys-Gly) (interchain with G-Cter in SUMO2) cross-links involve residues K599 and K605. Phosphoserine is present on S607. Glycyl lysine isopeptide (Lys-Gly) (interchain with G-Cter in SUMO2) cross-links involve residues K615, K620, K631, and K657. The C2H2-type 8; atypical zinc finger occupies 621 to 646 (TLCPLCFSILKGPISDALAHHLRERH). The segment at 661 to 685 (YKCIHCLGVYTSNMTASTITLHLVH) adopts a C2H2-type 9; atypical zinc-finger fold. A disordered region spans residues 690 to 711 (GKTQNGQDKTNAPSRLNQSPGL). Residues 691–709 (KTQNGQDKTNAPSRLNQSP) are compositionally biased toward polar residues. K698 participates in a covalent cross-link: Glycyl lysine isopeptide (Lys-Gly) (interchain with G-Cter in SUMO2). S708 is subject to Phosphoserine. Glycyl lysine isopeptide (Lys-Gly) (interchain with G-Cter in SUMO2) cross-links involve residues K715, K727, and K730. A Phosphoserine modification is found at S737. K744 is covalently cross-linked (Glycyl lysine isopeptide (Lys-Gly) (interchain with G-Cter in SUMO2)). A DNA-binding region (homeobox) is located at residues 753–813 (LDPKGHEDDS…SNKRKKCVRD (61 aa)). Position 804 is a phosphoserine (S804). Glycyl lysine isopeptide (Lys-Gly) (interchain with G-Cter in SUMO2) cross-links involve residues K806, K828, and K834. Basic and acidic residues predominate over residues 851-880 (KDSRVNASKTVDKKHNLGKEDDSFSDSFEH). Residues 851 to 1037 (KDSRVNASKT…DTEQLKWKNS (187 aa)) form a disordered region. 5 positions are modified to phosphoserine: S875, S877, S885, S888, and S904. Glycyl lysine isopeptide (Lys-Gly) (interchain with G-Cter in SUMO2) cross-links involve residues K913, K928, and K941. The segment covering 928–938 (KEEEEEEEEED) has biased composition (acidic residues). Residues 939-959 (GSKYETIHLTEEPAKLMHDAS) are compositionally biased toward basic and acidic residues. Phosphoserine occurs at positions 959 and 961. Over residues 977-988 (PSESGPGSQQIS) the composition is skewed to polar residues. Residue K1022 forms a Glycyl lysine isopeptide (Lys-Gly) (interchain with G-Cter in SUMO2) linkage. Residues K1041 and K1048 each carry the N6-acetyllysine; alternate modification. Residues K1041 and K1048 each participate in a glycyl lysine isopeptide (Lys-Gly) (interchain with G-Cter in SUMO2); alternate cross-link. Positions 1050-1108 (QSQWENASENAERLPNPQIEWQNSTIDSEDGEQFDSMTDGVADPMHGSLTGVKLSSQQA) are disordered. Position 1077 is a phosphoserine (S1077).

In terms of assembly, interacts (via N-terminal region) with beta-catenin/CTNNB1 (via the central armadillo domains); interaction is direct and stabilizes CTNNB1 by modulating its phosphorylation by glycogen synthase kinase-3 beta GSK3B. In terms of tissue distribution, expressed in the brain, with a higher expression in cerebellum and hippocampus. Weakly expressed in lung, kidney and intestine, and expressed at intermediate level in testis.

Its subcellular location is the nucleus. It localises to the chromosome. Its function is as follows. May be involved in transcriptional regulation. May mediate some of the neuroprotective peptide VIP-associated effects involving normal growth and cancer proliferation. Positively modulates WNT-beta-catenin/CTNN1B signaling, acting by regulating phosphorylation of, and thereby stabilizing, CTNNB1. May be required for neural induction and neuronal differentiation. May be involved in erythroid differentiation. The sequence is that of Activity-dependent neuroprotector homeobox protein (Adnp) from Mus musculus (Mouse).